The sequence spans 282 residues: Undecaprenyl-diphosphatase (282 aa).

The next 5 membrane-spanning stretches (helical) occupy residues 90-110, 121-141, 194-214, 228-248, and 256-276; these read YRLGWYVIIGTIPICILGLFF, LWVVVTALVVFSGVIALAEYV, FGFLLAIPAVFASGLFSLPDA, QLLVATLIAFVLGLTAVAWLL, and MYWFVGYRVLVGTGMLVLLAT.

The protein belongs to the UppP family.

It localises to the cell membrane. It carries out the reaction di-trans,octa-cis-undecaprenyl diphosphate + H2O = di-trans,octa-cis-undecaprenyl phosphate + phosphate + H(+). Catalyzes the dephosphorylation of undecaprenyl diphosphate (UPP). Confers resistance to bacitracin. The sequence is that of Undecaprenyl-diphosphatase from Mycobacterium tuberculosis (strain ATCC 25618 / H37Rv).